The chain runs to 432 residues: Adenylosuccinate synthetase (432 aa).

Residues G13–K19 and G41–T43 contribute to the GTP site. Catalysis depends on D14, which acts as the Proton acceptor. Positions 14 and 41 each coordinate Mg(2+). Residues D14–K17, N39–H42, T130, R144, Q225, T240, and R304 contribute to the IMP site. The Proton donor role is filled by H42. Residue A300 to R306 participates in substrate binding. GTP contacts are provided by residues R306, K332–D334, and S415–G417.

Belongs to the adenylosuccinate synthetase family. As to quaternary structure, homodimer. The cofactor is Mg(2+).

The protein localises to the cytoplasm. It carries out the reaction IMP + L-aspartate + GTP = N(6)-(1,2-dicarboxyethyl)-AMP + GDP + phosphate + 2 H(+). Its pathway is purine metabolism; AMP biosynthesis via de novo pathway; AMP from IMP: step 1/2. Plays an important role in the de novo pathway of purine nucleotide biosynthesis. Catalyzes the first committed step in the biosynthesis of AMP from IMP. The polypeptide is Adenylosuccinate synthetase (Salmonella typhi).